A 427-amino-acid chain; its full sequence is Delta(14)-sterol reductase (427 aa).

The Cytoplasmic portion of the chain corresponds to 1-25; sequence MSEQESRDNAAVDAVRQKYGFGFSW. A helical transmembrane segment spans residues 26–46; it reads LVLMIALPPLVYYLWICVTYY. The Periplasmic segment spans residues 47–70; it reads QGELVFTSDAAAWRRFWSHVAPPT. The helical transmembrane segment at 71-91 threads the bilayer; the sequence is WHAAGLYAAWFLGQAALQVWA. Over 92 to 110 the chain is Cytoplasmic; the sequence is PGPTVQGMKLPDGSRLDYR. The helical transmembrane segment at 111–131 threads the bilayer; sequence MNGIFSFLFTLAVVFGLVTMG. The Periplasmic segment spans residues 132–141; the sequence is WLDATVLYDQ. The chain crosses the membrane as a helical span at residues 142–162; sequence LGPLLTVVNIFTFVFAGFLYF. Residues 163–197 lie on the Cytoplasmic side of the membrane; the sequence is WGLNGKQWERPTGRPFYDYFMGTALNPRIGSLDLK. Residues 198–218 traverse the membrane as a helical segment; it reads LFCEARPGMIFWLLMNLSMAA. Topologically, residues 219–226 are periplasmic; it reads KQYELHGT. The chain crosses the membrane as a helical span at residues 227–247; sequence VTVPMLLVVGFQSFYLIDYFI. Residues 248–262 are Cytoplasmic-facing; that stretch reads HEEAVLTTWDIKHEK. A helical membrane pass occupies residues 263-283; the sequence is FGWMLCWGDLVWLPFTYTLQA. At 284-291 the chain is on the periplasmic side; that stretch reads QYLVHHTH. Residues 292–312 form a helical membrane-spanning segment; it reads DLPVWGIIAIVALNLAGYAIF. Topologically, residues 313-356 are cytoplasmic; sequence RGANIQKHHFRRDPNRIVWGKPAKYIKTKQGSLLLTSGWWGIAR. NADP(+) contacts are provided by residues lysine 319, arginine 323, leucine 347, tryptophan 352, and 359-360; that span reads NY. The helical transmembrane segment at 357–377 threads the bilayer; it reads HMNYFGDLMIALSWCLPAAFG. Serine 378 is a topological domain (periplasmic). Residues 379–399 traverse the membrane as a helical segment; that stretch reads PIPYFHIVYFTILLLHREKRD. NADP(+) contacts are provided by residues aspartate 399, 403–407, and tyrosine 414; that span reads CLAKY. At 400–427 the chain is on the cytoplasmic side; it reads DAMCLAKYGEDWLQYRKKVPWRIVPKIY.

This sequence belongs to the ERG4/ERG24 family.

It localises to the cell inner membrane. The enzyme catalyses 4,4-dimethyl-5alpha-cholesta-8,24-dien-3beta-ol + NADP(+) = 4,4-dimethyl-5alpha-cholesta-8,14,24-trien-3beta-ol + NADPH + H(+). It participates in steroid biosynthesis; zymosterol biosynthesis; zymosterol from lanosterol. Reduces the C14=C15 double bond of 4,4-dimethyl-cholesta-8,14,24-trienol to produce 4,4-dimethyl-cholesta-8,24-dienol. Complements the deletion of the Delta(14)-sterol reductase gene ERG24 in yeast. The chain is Delta(14)-sterol reductase from Methylotuvimicrobium alcaliphilum (strain DSM 19304 / NCIMB 14124 / VKM B-2133 / 20Z) (Methylomicrobium alcaliphilum).